We begin with the raw amino-acid sequence, 230 residues long: Ribosome-recycling factor, mitochondrial (230 aa).

The N-terminal 24 residues, 1-24 (MILTTARLNCRPVTVPRLFNRSFS), are a transit peptide targeting the mitochondrion.

This sequence belongs to the RRF family.

Its subcellular location is the mitochondrion. Functionally, necessary for protein synthesis in mitochondria. Functions as a ribosome recycling factor in mitochondria. The protein is Ribosome-recycling factor, mitochondrial (RRF1) of Saccharomyces cerevisiae (strain ATCC 204508 / S288c) (Baker's yeast).